The following is a 361-amino-acid chain: UDP-3-O-acylglucosamine N-acyltransferase (361 aa).

H253 (proton acceptor) is an active-site residue.

It belongs to the transferase hexapeptide repeat family. LpxD subfamily. As to quaternary structure, homotrimer.

The enzyme catalyses a UDP-3-O-[(3R)-3-hydroxyacyl]-alpha-D-glucosamine + a (3R)-hydroxyacyl-[ACP] = a UDP-2-N,3-O-bis[(3R)-3-hydroxyacyl]-alpha-D-glucosamine + holo-[ACP] + H(+). The protein operates within bacterial outer membrane biogenesis; LPS lipid A biosynthesis. Catalyzes the N-acylation of UDP-3-O-acylglucosamine using 3-hydroxyacyl-ACP as the acyl donor. Is involved in the biosynthesis of lipid A, a phosphorylated glycolipid that anchors the lipopolysaccharide to the outer membrane of the cell. The protein is UDP-3-O-acylglucosamine N-acyltransferase of Burkholderia thailandensis (strain ATCC 700388 / DSM 13276 / CCUG 48851 / CIP 106301 / E264).